A 293-amino-acid polypeptide reads, in one-letter code: 4-hydroxy-tetrahydrodipicolinate synthase (293 aa).

Pyruvate is bound at residue Thr-45. The active-site Proton donor/acceptor is the Tyr-133. Residue Lys-161 is the Schiff-base intermediate with substrate of the active site. Ile-203 lines the pyruvate pocket.

It belongs to the DapA family. In terms of assembly, homotetramer; dimer of dimers.

The protein resides in the cytoplasm. The enzyme catalyses L-aspartate 4-semialdehyde + pyruvate = (2S,4S)-4-hydroxy-2,3,4,5-tetrahydrodipicolinate + H2O + H(+). It participates in amino-acid biosynthesis; L-lysine biosynthesis via DAP pathway; (S)-tetrahydrodipicolinate from L-aspartate: step 3/4. Functionally, catalyzes the condensation of (S)-aspartate-beta-semialdehyde [(S)-ASA] and pyruvate to 4-hydroxy-tetrahydrodipicolinate (HTPA). This Shewanella piezotolerans (strain WP3 / JCM 13877) protein is 4-hydroxy-tetrahydrodipicolinate synthase.